The chain runs to 351 residues: MSTVVTIPRSVSWKGDAIAVLKQTKLPHSTEYKTLTTIEEVWKSIVMLEVRGAPAIGIVAAFGLALASKKYTTLHIEEFQKKFNRDCNYLGTSRPTAVNLFWAIDRMRESIQEITTIKEAQKILEEEALRIQQEDEAVCRSIGEHALTCFKDGDNILTICNAGSIATARYGTALAPFYIGKEKGVRLHAYACETRPVLQGGRLTTWELKQAGIDVTLITDNTAAHAIQTKEINAIIVGADRIVANGDTANKIGTMNLAILAKYFDIPFYVAAPLSTFDITKQTGAEIVIEERDETEVTKIFGKQVAPVGTTVYNPAFDVTPNKLITGIITEKGIICGDYKREIASLFEKTS.

Substrate is bound by residues 51-53, R94, and Q199; that span reads RGA. D240 serves as the catalytic Proton donor. Substrate is bound at residue 250–251; sequence NK.

This sequence belongs to the EIF-2B alpha/beta/delta subunits family. MtnA subfamily. In terms of assembly, homodimer.

It catalyses the reaction 5-(methylsulfanyl)-alpha-D-ribose 1-phosphate = 5-(methylsulfanyl)-D-ribulose 1-phosphate. The protein operates within amino-acid biosynthesis; L-methionine biosynthesis via salvage pathway; L-methionine from S-methyl-5-thio-alpha-D-ribose 1-phosphate: step 1/6. In terms of biological role, catalyzes the interconversion of methylthioribose-1-phosphate (MTR-1-P) into methylthioribulose-1-phosphate (MTRu-1-P). The chain is Methylthioribose-1-phosphate isomerase from Bacillus thuringiensis (strain Al Hakam).